Reading from the N-terminus, the 326-residue chain is Glycerol-3-phosphate dehydrogenase [NAD(P)+] (326 aa).

Residues S10, F11, R31, and K108 each coordinate NADPH. Positions 108, 136, and 138 each coordinate sn-glycerol 3-phosphate. A140 contacts NADPH. 5 residues coordinate sn-glycerol 3-phosphate: K191, D246, S256, R257, and N258. Residue K191 is the Proton acceptor of the active site. R257 is an NADPH binding site. NADPH contacts are provided by I281 and E283.

The protein belongs to the NAD-dependent glycerol-3-phosphate dehydrogenase family.

It localises to the cytoplasm. The enzyme catalyses sn-glycerol 3-phosphate + NAD(+) = dihydroxyacetone phosphate + NADH + H(+). The catalysed reaction is sn-glycerol 3-phosphate + NADP(+) = dihydroxyacetone phosphate + NADPH + H(+). Its pathway is membrane lipid metabolism; glycerophospholipid metabolism. In terms of biological role, catalyzes the reduction of the glycolytic intermediate dihydroxyacetone phosphate (DHAP) to sn-glycerol 3-phosphate (G3P), the key precursor for phospholipid synthesis. In Ehrlichia chaffeensis (strain ATCC CRL-10679 / Arkansas), this protein is Glycerol-3-phosphate dehydrogenase [NAD(P)+].